Reading from the N-terminus, the 595-residue chain is Neuroepithelial cell-transforming gene 1 protein (595 aa).

At Met1 the chain carries N-acetylmethionine. The segment at 1 to 42 is disordered; sequence MEPEPAAQKQPRPRRRSRRVSMLSEEPAAGLPADTPGPAANE. The segment at 1 to 74 is necessary for nuclear localization; that stretch reads MEPEPAAQKQ…LKRKRREKDD (74 aa). Positions 12 to 19 match the Nuclear localization signal motif; sequence RPRRRSRR. Ser21 is modified (phosphoserine). A Nuclear localization signal motif is present at residues 66 to 72; the sequence is KRKRREK. 3 positions are modified to phosphoserine: Ser100, Ser106, and Ser122. Residues 127–151 are disordered; the sequence is GDHRSPASAQKSFSRSTVPTPTKRR. Over residues 133 to 146 the composition is skewed to polar residues; sequence ASAQKSFSRSTVPT. A DH domain is found at 174-356; that stretch reads KRQEAIYELS…QGVLSDINLK (183 aa). The 116-residue stretch at 386–501 folds into the PH domain; the sequence is VLLCHGELKN…WFNCIRAAIA (116 aa). Ser508 carries the post-translational modification Phosphoserine. A disordered region spans residues 555–595; it reads CGSSVQTVEDTRNMKAQRPQPGLRRARDKAQSGGKKKETLV.

In terms of assembly, interacts with RHOA in its GTP- and GDP-bound states, and with CDC42 in its GTP-bound state. Interacts with the PDZ 1 domain of BAIAP1.

The protein resides in the cytoplasm. It is found in the nucleus. In terms of biological role, acts as a guanine nucleotide exchange factor (GEF) for RhoA GTPase. May be involved in activation of the SAPK/JNK pathway. Stimulates genotoxic stress-induced RHOB activity in breast cancer cells leading to their cell death. This Mus musculus (Mouse) protein is Neuroepithelial cell-transforming gene 1 protein (Net1).